The following is a 337-amino-acid chain: D-alanine--D-alanine ligase (337 aa).

The region spanning 124-330 (KMWFSALGIP…FTEYLSLVIN (207 aa)) is the ATP-grasp domain. An ATP-binding site is contributed by 154–209 (ALAQWGSIFVKAASQGSSVGCYKVDDSDKVAGVLKDAFGYAPYVIVEKTIKARELE). Asp-284, Glu-297, and Asn-299 together coordinate Mg(2+).

This sequence belongs to the D-alanine--D-alanine ligase family. Requires Mg(2+) as cofactor. Mn(2+) serves as cofactor.

It is found in the cytoplasm. The catalysed reaction is 2 D-alanine + ATP = D-alanyl-D-alanine + ADP + phosphate + H(+). It functions in the pathway cell wall biogenesis; peptidoglycan biosynthesis. Its function is as follows. Cell wall formation. This Shewanella baltica (strain OS195) protein is D-alanine--D-alanine ligase.